The sequence spans 132 residues: Putative apolipoprotein(a)-like protein 2 (132 aa).

An N-terminal signal peptide occupies residues 1-21 (MEHKEVVLLLLLFLKSAPTET). The Kringle domain maps to 27-105 (ECYHSNGQSY…RWEYCNLTRC (79 aa)). 3 disulfide bridges follow: Cys-28/Cys-105, Cys-49/Cys-88, and Cys-77/Cys-100. An N-linked (GlcNAc...) asparagine glycan is attached at Asn-101.

As to expression, expressed in liver but not in other tissues tested.

It localises to the secreted. This Homo sapiens (Human) protein is Putative apolipoprotein(a)-like protein 2 (LPAL2).